We begin with the raw amino-acid sequence, 253 residues long: 5'/3'-nucleotidase SurE (253 aa).

Residues aspartate 8, aspartate 9, serine 39, and asparagine 92 each contribute to the a divalent metal cation site.

It belongs to the SurE nucleotidase family. A divalent metal cation serves as cofactor.

The protein resides in the cytoplasm. It carries out the reaction a ribonucleoside 5'-phosphate + H2O = a ribonucleoside + phosphate. The catalysed reaction is a ribonucleoside 3'-phosphate + H2O = a ribonucleoside + phosphate. It catalyses the reaction [phosphate](n) + H2O = [phosphate](n-1) + phosphate + H(+). Its function is as follows. Nucleotidase with a broad substrate specificity as it can dephosphorylate various ribo- and deoxyribonucleoside 5'-monophosphates and ribonucleoside 3'-monophosphates with highest affinity to 3'-AMP. Also hydrolyzes polyphosphate (exopolyphosphatase activity) with the preference for short-chain-length substrates (P20-25). Might be involved in the regulation of dNTP and NTP pools, and in the turnover of 3'-mononucleotides produced by numerous intracellular RNases (T1, T2, and F) during the degradation of various RNAs. In Shigella boydii serotype 18 (strain CDC 3083-94 / BS512), this protein is 5'/3'-nucleotidase SurE.